Here is a 244-residue protein sequence, read N- to C-terminus: Centromere protein H (244 aa).

Met1 carries the post-translational modification N-acetylmethionine. Positions 1 to 33 (METQSEEQAVTKPADSGGEGGPPQVAGAQAARP) are disordered. Residue Ser16 is modified to Phosphoserine. The segment covering 22–31 (PPQVAGAQAA) has biased composition (low complexity). Lys64 is covalently cross-linked (Glycyl lysine isopeptide (Lys-Gly) (interchain with G-Cter in SUMO2)). Thr65 is modified (phosphothreonine). Coiled coils occupy residues 66–104 (PEQI…DRMQ) and 146–189 (DLEE…MENS).

The protein belongs to the CENP-H/MCM16 family. Self-associates. Component of the CENPA-NAC complex, at least composed of CENPA, CENPC, CENPH, CENPM, CENPN, CENPT and CENPU. The CENPA-NAC complex interacts with the CENPA-CAD complex, composed of CENPI, CENPK, CENPL, CENPO, CENPP, CENPQ, CENPR and CENPS. Interacts with KIF2C and NDC80.

Its subcellular location is the nucleus. It is found in the chromosome. The protein resides in the centromere. The protein localises to the kinetochore. Its function is as follows. Component of the CENPA-NAC (nucleosome-associated) complex, a complex that plays a central role in assembly of kinetochore proteins, mitotic progression and chromosome segregation. The CENPA-NAC complex recruits the CENPA-CAD (nucleosome distal) complex and may be involved in incorporation of newly synthesized CENPA into centromeres. This chain is Centromere protein H (CENPH), found in Bos taurus (Bovine).